The following is an 825-amino-acid chain: Ubiquitin carboxyl-terminal hydrolase 16 (825 aa).

The segment at 1–20 (MGKKRTKGRSAPDTVASESA) is disordered. A UBP-type zinc finger spans residues 22–141 (PVCRHLRKGL…QVVDYVRKQA (120 aa)). Residues C24, H26, C48, C51, C73, C76, C81, H89, H93, H102, C115, and C118 each contribute to the Zn(2+) site. Residue K139 forms a Glycyl lysine isopeptide (Lys-Gly) (interchain with G-Cter in SUMO2) linkage. Over residues 164–180 (EKESKNEQEREKSENLA) the composition is skewed to basic and acidic residues. The tract at residues 164-184 (EKESKNEQEREKSENLAKETI) is disordered. The residue at position 188 (S188) is a Phosphoserine. Residues 195-824 (KGLSNLGNTC…QAYLLFYERI (630 aa)) enclose the USP domain. The Nucleophile role is filled by C204. A compositionally biased stretch (basic and acidic residues) spans 393 to 407 (SGKKSINDKNVKMTM). The tract at residues 393-456 (SGKKSINDKN…KQAKNQRRQQ (64 aa)) is disordered. A compositionally biased stretch (acidic residues) spans 408 to 419 (EEEDKDSEEEKD). Residue S414 is modified to Phosphoserine. Basic residues predominate over residues 436 to 456 (HLQKKAKKQAKKQAKNQRRQQ). S520 and S531 each carry phosphoserine. Residue H759 is the Proton acceptor of the active site.

It belongs to the peptidase C19 family. USP16 subfamily. As to quaternary structure, homotetramer. Associates with late pre-40S ribosomes. Interacts with CEP78; promoting deubiquitination of tektins. In terms of processing, phosphorylated at the onset of mitosis and dephosphorylated during the metaphase/anaphase transition. Phosphorylation by AURKB enhances the deubiquitinase activity.

It is found in the nucleus. The protein resides in the cytoplasm. The enzyme catalyses Thiol-dependent hydrolysis of ester, thioester, amide, peptide and isopeptide bonds formed by the C-terminal Gly of ubiquitin (a 76-residue protein attached to proteins as an intracellular targeting signal).. Functionally, specifically deubiquitinates 'Lys-120' of histone H2A (H2AK119Ub), a specific tag for epigenetic transcriptional repression, thereby acting as a coactivator. Deubiquitination of histone H2A is a prerequisite for subsequent phosphorylation at 'Ser-11' of histone H3 (H3S10ph), and is required for chromosome segregation when cells enter into mitosis. In resting B- and T-lymphocytes, phosphorylation by AURKB leads to enhance its activity, thereby maintaining transcription in resting lymphocytes. Regulates Hox gene expression via histone H2A deubiquitination. Prefers nucleosomal substrates. Does not deubiquitinate histone H2B. Also deubiquitinates non-histone proteins, such as ribosomal protein RPS27A: deubiquitination of monoubiquitinated RPS27A promotes maturation of the 40S ribosomal subunit. Also mediates deubiquitination of tektin proteins (TEKT1, TEKT2, TEK3, TEKT4 and TEKT5), promoting their stability. The polypeptide is Ubiquitin carboxyl-terminal hydrolase 16 (Usp16) (Mus musculus (Mouse)).